Consider the following 661-residue polypeptide: Heme transporter BhuA (661 aa).

Residues 1 to 23 form the signal peptide; sequence MKFTRTLVLASTSLLATVATSQA. The region spanning 48–159 is the TBDR plug domain; the sequence is KDNIEATGGT…AAGAIRYETV (112 aa). In terms of domain architecture, TBDR beta-barrel spans 170 to 661; that stretch reads TFGARIIGSY…TFTFQTAFKF (492 aa).

It belongs to the TonB-dependent receptor family.

The protein localises to the cell outer membrane. Heme transporter. The protein is Heme transporter BhuA (bhuA) of Brucella abortus biovar 1 (strain 9-941).